A 265-amino-acid chain; its full sequence is MKVAIVHNDRVTTQVAVRHLQVLLAEKGILQDQQHPDLVISVGGDGTLISAFHKYKQQLDKVCFAGIHTGHLGFYTDWRNYDMEKLVDALASHPVEENEVGYPLLDMKVTTSCGEKRFLALNEASIKRISKTMEAEVWLGGERFENFRGDGLCVSTPTGSTAYSKSLGGAVIHPRLKTLQLTEIASINNLVFRTVGSPIVIAPDEWITIVPKISDRVVVIVDGERISLTDVQKVDYKIAAEEIRFYQYGHHHFWERVNDAFIGDR.

The Proton acceptor role is filled by aspartate 45. Residues 45-46 (DG), 122-123 (NE), arginine 148, aspartate 150, 161-166 (TAYSKS), and alanine 185 contribute to the NAD(+) site.

Belongs to the NAD kinase family. It depends on a divalent metal cation as a cofactor.

It is found in the cytoplasm. The catalysed reaction is NAD(+) + ATP = ADP + NADP(+) + H(+). In terms of biological role, involved in the regulation of the intracellular balance of NAD and NADP, and is a key enzyme in the biosynthesis of NADP. Catalyzes specifically the phosphorylation on 2'-hydroxyl of the adenosine moiety of NAD to yield NADP. The sequence is that of NAD kinase from Lactobacillus delbrueckii subsp. bulgaricus (strain ATCC 11842 / DSM 20081 / BCRC 10696 / JCM 1002 / NBRC 13953 / NCIMB 11778 / NCTC 12712 / WDCM 00102 / Lb 14).